The chain runs to 44 residues: Thymosin beta-4 (44 aa).

Composition is skewed to basic and acidic residues over residues 1-25 (MSDK…ETQE) and 33-44 (ETIEQEKQTSES). Residues 1–44 (MSDKPDMAEIEKFDKAKLKKTETQEKNPLPSKETIEQEKQTSES) form a disordered region. N-acetylserine is present on serine 2.

Belongs to the thymosin beta family. As to expression, spleen, kidney, heart, and oocytes.

It is found in the cytoplasm. Its subcellular location is the cytoskeleton. Plays an important role in the organization of the cytoskeleton. Binds to and sequesters actin monomers (G actin) and therefore inhibits actin polymerization. This chain is Thymosin beta-4 (tmsb4), found in Xenopus laevis (African clawed frog).